Consider the following 539-residue polypeptide: Tripartite motif-containing protein 26 (539 aa).

Residues 16 to 57 (CSICLDYLRDPVTIDCGHVFCRSCTTDVRPISGSRPVCPLCK) form an RING-type zinc finger. The B box-type zinc finger occupies 97-138 (QDAKLCERHREKLHYYCEDDGKLLCVMCRESREHRPHTAVLM). Zn(2+)-binding residues include C102, H105, C124, and H130. The stretch at 188 to 227 (IVAEFEQGHQFLREREEHLLEQLAKLEQELTEGREKFKSR) forms a coiled coil. A B30.2/SPRY domain is found at 295–539 (RGLREFQGKL…WPGTRLLLRP (245 aa)). The disordered stretch occupies residues 376–437 (REGWSEDEEE…EEEEEVLESC (62 aa)). Residues 380–434 (SEDEEEGDEEEEGEEEEEEEEAGYGDGYDDWETDEDEESLGDEEEEEEEEEEEVL) are compositionally biased toward acidic residues.

Belongs to the TRIM/RBCC family. As to quaternary structure, interacts with TBK1; this interaction bridges together TBK1 and NEMO in order to activate TBK1. Interacts with INCA1. Post-translationally, autoubiquitinates upon viral infection. In turn, autoubiquitinated TRIM26 recruits NEMO and bridges TBK1-NEMO interaction.

The protein resides in the cytoplasm. The protein localises to the nucleus. The catalysed reaction is S-ubiquitinyl-[E2 ubiquitin-conjugating enzyme]-L-cysteine + [acceptor protein]-L-lysine = [E2 ubiquitin-conjugating enzyme]-L-cysteine + N(6)-ubiquitinyl-[acceptor protein]-L-lysine.. Its function is as follows. E3 ubiquitin-protein ligase which regulates the IFN-beta production and antiviral response downstream of various DNA-encoded pattern-recognition receptors (PRRs). Also plays a central role in determining the response to different forms of oxidative stress by controlling levels of DNA glycosylases NEIL1, NEIL3 and NTH1 that are involved in repair of damaged DNA. Promotes nuclear IRF3 ubiquitination and proteasomal degradation. Bridges together TBK1 and NEMO during the innate response to viral infection leading to the activation of TBK1. Positively regulates LPS-mediated inflammatory innate immune response by catalyzing the 'Lys-11'-linked polyubiquitination of TAB1 to enhance its activation and subsequent NF-kappa-B and MAPK signaling. In a manner independent of its catalytic activity, inhibits WWP2, a SOX2-directed E3 ubiquitin ligase, and thus protects SOX2 from polyubiquitination and proteasomal degradation. Ubiquitinates the histone acetyltransferase protein complex component PHF20 and thereby triggers its degradation in the nucleus after its recruitment by the histone demethylase KDM6B, serving as a scaffold protein. Upon induction by TGF-beta, ubiquitinates the TFIID component TAF7 for proteasomal degradation. Induces ferroptosis by ubiquitinating SLC7A11, a critical protein for lipid reactive oxygen species (ROS) scavenging. Inhibits directly hepatitis B virus replication by mediating HBX ubiquitination and subsequent degradation. In terms of biological role, (Microbial infection) Promotes herpes simplex virus type 2/HHV-2 infection in vaginal epithelial cells by decreasing the nuclear localization of IRF3, the primary mediator of type I interferon activation. The sequence is that of Tripartite motif-containing protein 26 (TRIM26) from Homo sapiens (Human).